The chain runs to 512 residues: Glutathione-binding protein GsiB (512 aa).

An N-terminal signal peptide occupies residues 1 to 26; the sequence is MARAVHRSGLVALGIATALMASCAFA.

The protein belongs to the bacterial solute-binding protein 5 family. As to quaternary structure, the complex is composed of two ATP-binding proteins (GsiA), two transmembrane proteins (GsiC and GsiD) and a solute-binding protein (GsiB).

The protein resides in the periplasm. Functionally, part of the ABC transporter complex GsiABCD involved in glutathione import. Binds glutathione. This Escherichia coli O157:H7 protein is Glutathione-binding protein GsiB.